Consider the following 340-residue polypeptide: Cysteinyl leukotriene receptor 1 (340 aa).

Residues 1–31 (MDGVRNLTVSCASSNTCNDTIDDFRNQVYST) are Extracellular-facing. N-linked (GlcNAc...) asparagine glycans are attached at residues Asn6 and Asn18. The helical transmembrane segment at 32-52 (LYSMITVVGFFGNGFVLYVLI) threads the bilayer. Residues 53 to 60 (KTYHEKSA) are Cytoplasmic-facing. A helical transmembrane segment spans residues 61 to 81 (YQVYMINLAVADLLCVCTLPL). The Extracellular segment spans residues 82-109 (RVVYYVHKGIWLFGDFLCRLSTYALYVN). An intrachain disulfide couples Cys99 to Cys176. The helical transmembrane segment at 110–130 (LYCSIFFMTAMSFFRCIAIVF) threads the bilayer. The Cytoplasmic segment spans residues 131-144 (PVQNINLITHKKAK). The chain crosses the membrane as a helical span at residues 145–165 (IVCIAIWIFVILTSSPFLMST). The Extracellular portion of the chain corresponds to 166-196 (SYKDEKNNTKCFEPPQXNQAKYHVLVLHYVS). N-linked (GlcNAc...) asparagine glycosylation is present at Asn172. Residues 197–217 (LFVGFIIPFVIIIVCYTMIIL) traverse the membrane as a helical segment. Residues 218–233 (TLLKNSMKKNISSRKK) are Cytoplasmic-facing. Residues 234–254 (AIGMIIVVTAAFLISFMPYHI) form a helical membrane-spanning segment. At 255–279 (QRTIHLHFLHNDTKHCDSVLRMQKS) the chain is on the extracellular side. N-linked (GlcNAc...) asparagine glycosylation occurs at Asn265. Residues 280–300 (VXITLSLAASNCCFDPLLYFF) form a helical membrane-spanning segment. Over 301 to 340 (SGGNFREGLSTFRKHSLSTMTYVPKKKTSLPEKAQEIYKE) the chain is Cytoplasmic.

The protein belongs to the G-protein coupled receptor 1 family.

Its subcellular location is the cell membrane. Its function is as follows. Receptor for cysteinyl leukotrienes mediating constriction of the microvascular smooth muscle during an inflammatory response. This response is mediated via a G-protein that activates a phosphatidylinositol-calcium second messenger system. The chain is Cysteinyl leukotriene receptor 1 (CYSLTR1) from Sus scrofa (Pig).